Reading from the N-terminus, the 948-residue chain is Insulin receptor substrate 1 (948 aa).

The region spanning 8–109 (GMALSGYLKK…WLDKLLVLQR (102 aa)) is the PH domain. One can recognise an IRS-type PTB domain in the interval 122-236 (YDQVWQVVIQ…SAMSAKTESN (115 aa)). Residues 247–270 (PDLSHEPMRKRSSSANEASKPINV) form a disordered region. 2 positions are modified to phosphoserine: Ser-286 and Ser-287. Residues 304–329 (RNGTLSESSNQTYFGSNHGLRSNTIS) are compositionally biased toward polar residues. The disordered stretch occupies residues 304–373 (RNGTLSESSN…SDDNGSFSHY (70 aa)). The residue at position 342 (Ser-342) is a Phosphoserine. Tyr-410 carries the post-translational modification Phosphotyrosine; by INSR. The YXXM motif 1 motif lies at 410-413 (YIPM). A disordered region spans residues 528-559 (ANRSQSSITKEGTSYSTSSNRQKKSTSAPLLS). Residues 529–556 (NRSQSSITKEGTSYSTSSNRQKKSTSAP) show a composition bias toward polar residues. A Phosphoserine modification is found at Ser-554. The short motif at 640-643 (YLEM) is the YXXM motif 2 element. The disordered stretch occupies residues 703–734 (EKKSNSPLNETPCSLKPTDVESNSHDEHSTNN). Positions 720–731 (TDVESNSHDEHS) are enriched in basic and acidic residues. Residue Tyr-891 is modified to Phosphotyrosine; by INSR. The disordered stretch occupies residues 907–948 (YLKRGSRESPPVSACPGDGNTYAKIDFDQSDSSSSSSNIFNT). Phosphoserine is present on residues Ser-912 and Ser-915. Residue Tyr-928 is modified to Phosphotyrosine; by INSR. A compositionally biased stretch (low complexity) spans 936–948 (SDSSSSSSNIFNT).

As to quaternary structure, bindings to phosphatidylinositol 3-kinase and SHP2.

Functionally, activates phosphatidylinositol 3-kinase when bound to the regulatory p85 subunit. May mediate the control of various cellular processes by insulin-like peptides. When phosphorylated by the insulin receptor binds specifically to various cellular proteins containing SH2 domains. Involved in control of cell proliferation, cell size, and body and organ growth throughout development. Also has a role in a signaling pathway controlling the physiological response required to endure periods of low nutrient conditions. Insulin/insulin-like growth factor (IGF) signaling pathway has a role in regulating aging and is necessary in the ovary for vitellogenic maturation. The polypeptide is Insulin receptor substrate 1 (Drosophila erecta (Fruit fly)).